The following is a 210-amino-acid chain: Putative transmembrane protein DDB_G0267530 (210 aa).

The disordered stretch occupies residues methionine 1 to glutamine 40. Transmembrane regions (helical) follow at residues valine 119 to isoleucine 139 and threonine 148 to valine 168.

The protein localises to the membrane. This Dictyostelium discoideum (Social amoeba) protein is Putative transmembrane protein DDB_G0267530.